The chain runs to 201 residues: Putative amino-acid transporter Mb0498 (201 aa).

The next 5 membrane-spanning stretches (helical) occupy residues 25 to 45, 57 to 77, 104 to 124, 133 to 153, and 169 to 189; these read VLVIVALCGIADGALIAAGVG, MTLVARFGGAAFLIGYALLAA, LVVTFLNPHVYLDTVVLIGAL, WFFGAGAWAASVVWFAVLGFS, and ILDALVAVTMIGVAVVVLVTS.

The protein belongs to the LysE/ArgO transporter (TC 2.A.75) family.

Its subcellular location is the cell membrane. This is Putative amino-acid transporter Mb0498 from Mycobacterium bovis (strain ATCC BAA-935 / AF2122/97).